Reading from the N-terminus, the 486-residue chain is Galactose-1-phosphate uridylyltransferase (486 aa).

The protein belongs to the galactose-1-phosphate uridylyltransferase type 2 family.

It localises to the cytoplasm. It carries out the reaction alpha-D-galactose 1-phosphate + UDP-alpha-D-glucose = alpha-D-glucose 1-phosphate + UDP-alpha-D-galactose. It functions in the pathway carbohydrate metabolism; galactose metabolism. The sequence is that of Galactose-1-phosphate uridylyltransferase from Lacticaseibacillus paracasei (strain ATCC 334 / BCRC 17002 / CCUG 31169 / CIP 107868 / KCTC 3260 / NRRL B-441) (Lactobacillus paracasei).